Consider the following 97-residue polypeptide: Putative membrane protein insertion efficiency factor (97 aa).

The interval 77–97 is disordered; sequence VPDAPASPSPSSSCSCKGPHP. A compositionally biased stretch (low complexity) spans 85-97; the sequence is SPSSSCSCKGPHP.

The protein belongs to the UPF0161 family.

The protein localises to the cell inner membrane. Could be involved in insertion of integral membrane proteins into the membrane. This Xanthomonas euvesicatoria pv. vesicatoria (strain 85-10) (Xanthomonas campestris pv. vesicatoria) protein is Putative membrane protein insertion efficiency factor.